The sequence spans 330 residues: Probable L-asparaginase (330 aa).

The 325-residue stretch at 6 to 330 (PTIALLATGG…EKIQEMFEEY (325 aa)) folds into the Asparaginase/glutaminase domain. Threonine 16 acts as the O-isoaspartyl threonine intermediate in catalysis. Substrate contacts are provided by residues serine 62 and 95–96 (TD).

Belongs to the asparaginase 1 family.

It localises to the cytoplasm. The catalysed reaction is L-asparagine + H2O = L-aspartate + NH4(+). The protein is Probable L-asparaginase (ansA) of Helicobacter pylori (strain ATCC 700392 / 26695) (Campylobacter pylori).